The sequence spans 505 residues: Histidine ammonia-lyase (505 aa).

A cross-link (5-imidazolinone (Ala-Gly)) is located at residues 141 to 143 (ASG). Position 142 is a 2,3-didehydroalanine (Ser) (serine 142).

The protein belongs to the PAL/histidase family. Post-translationally, contains an active site 4-methylidene-imidazol-5-one (MIO), which is formed autocatalytically by cyclization and dehydration of residues Ala-Ser-Gly.

Its subcellular location is the cytoplasm. The enzyme catalyses L-histidine = trans-urocanate + NH4(+). It functions in the pathway amino-acid degradation; L-histidine degradation into L-glutamate; N-formimidoyl-L-glutamate from L-histidine: step 1/3. This Bacillus cereus (strain 03BB102) protein is Histidine ammonia-lyase.